Reading from the N-terminus, the 133-residue chain is Cytochrome c-554 (133 aa).

Gln1 bears the Pyrrolidone carboxylic acid mark. Heme c is bound by residues Met17, Cys122, Cys125, and His126.

Post-translationally, binds 1 heme c group covalently per subunit.

The protein localises to the periplasm. Monoheme c-type cytochrome, that is particularly expressed when cells generate energy via aerobic respiration. The polypeptide is Cytochrome c-554 (cycF) (Cereibacter sphaeroides (Rhodobacter sphaeroides)).